The primary structure comprises 63 residues: Large ribosomal subunit protein uL29 (63 aa).

The protein belongs to the universal ribosomal protein uL29 family.

This chain is Large ribosomal subunit protein uL29, found in Azotobacter vinelandii (strain DJ / ATCC BAA-1303).